An 89-amino-acid chain; its full sequence is Large ribosomal subunit protein eL34 (89 aa).

The tract at residues 1-22 (MPAPRYKSGSSKKVYRKAPGNS) is disordered.

This sequence belongs to the eukaryotic ribosomal protein eL34 family.

The polypeptide is Large ribosomal subunit protein eL34 (Methanococcus maripaludis (strain C7 / ATCC BAA-1331)).